The chain runs to 160 residues: Cytochrome b6-f complex subunit 4 (160 aa).

Transmembrane regions (helical) follow at residues 36-56 (LLYVFPIVIMGSFAAIVALAV), 95-115 (LLGVLAMASVPLGLILVPFIE), and 131-151 (TVFLFGTLVTLWLGIGAALPL).

This sequence belongs to the cytochrome b family. PetD subfamily. The 4 large subunits of the cytochrome b6-f complex are cytochrome b6, subunit IV (17 kDa polypeptide, PetD), cytochrome f and the Rieske protein, while the 4 small subunits are PetG, PetL, PetM and PetN. The complex functions as a dimer.

The protein resides in the cellular thylakoid membrane. Component of the cytochrome b6-f complex, which mediates electron transfer between photosystem II (PSII) and photosystem I (PSI), cyclic electron flow around PSI, and state transitions. The sequence is that of Cytochrome b6-f complex subunit 4 from Desmonostoc sp. (strain PCC 7906) (Nostoc sp. (strain PCC 7906)).